The primary structure comprises 3095 residues: HD protein homolog (3095 aa).

Disordered stretches follow at residues 105–197 (PHQH…NGNA), 536–561 (QQQQQQQQQQQQQQQQHNLTSSTMSG), 1312–1371 (PPQQ…STVI), 1509–1547 (KSTSSSSSSSSTATSPSSSSSSTTTTTTTSTNTTTTTPS), and 2005–2037 (KELTNNNNNNNNNIIEKEEEEKEKEKEKVKEEE). The segment covering 115–139 (STNLTDHLSQNSVTPSVPTTPNYQQ) has biased composition (polar residues). Composition is skewed to low complexity over residues 140-197 (SPST…NGNA) and 536-551 (QQQQQQQQQQQQQQQQ). Positions 552-561 (HNLTSSTMSG) are enriched in polar residues. 3 stretches are compositionally biased toward low complexity: residues 1315–1368 (QQQQ…LNNS), 1510–1547 (STSSSSSSSSTATSPSSSSSSTTTTTTTSTNTTTTTPS), and 2008–2018 (TNNNNNNNNNI).

This sequence belongs to the huntingtin family.

The protein localises to the cytoplasm. The protein resides in the nucleus. May play a role in microtubule-mediated transport or vesicle function. This is HD protein homolog (htt) from Dictyostelium discoideum (Social amoeba).